The following is a 113-amino-acid chain: Protein FAM27E3 (113 aa).

The tract at residues M1 to L113 is disordered. Basic and acidic residues predominate over residues Q77 to R99. Basic residues predominate over residues H100–L113.

The protein belongs to the FAM27 family.

This is Protein FAM27E3 (FAM27E3) from Homo sapiens (Human).